Here is a 205-residue protein sequence, read N- to C-terminus: Isochorismatase domain-containing protein 2 (205 aa).

Serine 7 and serine 202 each carry phosphoserine.

The protein belongs to the isochorismatase family. As to quaternary structure, interacts with CDKN2A.

It localises to the cytoplasm. The protein resides in the nucleus. The chain is Isochorismatase domain-containing protein 2 (ISOC2) from Homo sapiens (Human).